Here is a 322-residue protein sequence, read N- to C-terminus: Outer membrane protein assembly factor BamC (322 aa).

The signal sequence occupies residues 1–22 (MISLLAVAVLAGCSNPETRSQA).

This sequence belongs to the BamC family. In terms of assembly, part of the Bam complex.

Its subcellular location is the cell outer membrane. In terms of biological role, part of the outer membrane protein assembly complex, which is involved in assembly and insertion of beta-barrel proteins into the outer membrane. In Oceanimonas sp. (strain GK1 / IBRC-M 10197), this protein is Outer membrane protein assembly factor BamC.